The chain runs to 122 residues: Large ribosomal subunit protein uL14 (122 aa).

Belongs to the universal ribosomal protein uL14 family. As to quaternary structure, part of the 50S ribosomal subunit. Forms a cluster with proteins L3 and L19. In the 70S ribosome, L14 and L19 interact and together make contacts with the 16S rRNA in bridges B5 and B8.

Binds to 23S rRNA. Forms part of two intersubunit bridges in the 70S ribosome. The chain is Large ribosomal subunit protein uL14 from Micrococcus luteus (Micrococcus lysodeikticus).